The chain runs to 620 residues: MTTELLDRILSPADLRQLDRRELKRLADELRGFVLESVSRTGGHLSSNLGTVELSLALHYVFDTPHDRIVWDVGHQSYPHKILTGRREGMAHLRQQGGISGFPKRSESEYDAFGTAHSSTSISAALGMAVASRNAGVQRQHIAVIGDGAMSAGMAFEAMNNAGVTPNINLLVVLNDNDMSISPPVGALNRYLARLMSGQFYAAAKNVGRAVLQHVPPVLELARRLEEHAKGMVTPATLFEEFGFNYVGPIDGHDLDALVPTLQNLRALPGLQFLHVVTRKGQGYKLAEADPVLYHGPGKFDPAVGIQQAKAPARKTFTQVFGQWLCDMAERDERLVGITPAMREGSGLVEFEQRFPQRYFDVGIAEQHAVTFAAGLACEGQKPVVAIYSTFLQRGYDQLVHDVALQNLDVTFALDRAGLVGADGATHAGNYDIAFLRCVPNMVVAAPSDESEARLLLSTCYEHPGPASVRYPRGAGCGAAVGEGLATVPLGKGLVRREGRRIAILGFGTLVQAALGAAGQIDATVADMRFVKPLDRELVLELAARHDALVTVEEAAIMGGAGSAVLETLAEAGVTLPVLQLGLPDAFIDHGDQAALLAGLGLDAAGIERAIRARFGALLA.

Thiamine diphosphate is bound by residues H75 and 116–118 (AHS). D147 contacts Mg(2+). Residues 148–149 (GA), N177, Y284, and E366 contribute to the thiamine diphosphate site. Mg(2+) is bound at residue N177.

Belongs to the transketolase family. DXPS subfamily. As to quaternary structure, homodimer. The cofactor is Mg(2+). Thiamine diphosphate is required as a cofactor.

It carries out the reaction D-glyceraldehyde 3-phosphate + pyruvate + H(+) = 1-deoxy-D-xylulose 5-phosphate + CO2. Its pathway is metabolic intermediate biosynthesis; 1-deoxy-D-xylulose 5-phosphate biosynthesis; 1-deoxy-D-xylulose 5-phosphate from D-glyceraldehyde 3-phosphate and pyruvate: step 1/1. Catalyzes the acyloin condensation reaction between C atoms 2 and 3 of pyruvate and glyceraldehyde 3-phosphate to yield 1-deoxy-D-xylulose-5-phosphate (DXP). This is 1-deoxy-D-xylulose-5-phosphate synthase from Bordetella bronchiseptica (strain ATCC BAA-588 / NCTC 13252 / RB50) (Alcaligenes bronchisepticus).